We begin with the raw amino-acid sequence, 194 residues long: Erythropoietin (194 aa).

The first 26 residues, 1–26, serve as a signal peptide directing secretion; it reads MGARECPARLLLLSLLLLPLGLPVLG. Intrachain disulfides connect Cys-33–Cys-189 and Cys-55–Cys-59. Asn-50 is a glycosylation site (N-linked (GlcNAc...) asparagine). Asn-64, Asn-109, and Asn-172 each carry an N-linked (GlcNAc...) asparagine glycan.

This sequence belongs to the EPO/TPO family. In terms of tissue distribution, produced by kidney or liver of adult mammals and by liver of fetal or neonatal mammals.

Its subcellular location is the secreted. Its function is as follows. Hormone involved in the regulation of erythrocyte proliferation and differentiation and the maintenance of a physiological level of circulating erythrocyte mass. Binds to EPOR leading to EPOR dimerization and JAK2 activation thereby activating specific downstream effectors, including STAT1 and STAT3. The chain is Erythropoietin (EPO) from Sus scrofa (Pig).